The following is a 107-amino-acid chain: UPF0122 protein MYPE4850 (107 aa).

Belongs to the UPF0122 family.

Its function is as follows. Might take part in the signal recognition particle (SRP) pathway. This is inferred from the conservation of its genetic proximity to ftsY/ffh. May be a regulatory protein. The chain is UPF0122 protein MYPE4850 from Malacoplasma penetrans (strain HF-2) (Mycoplasma penetrans).